A 483-amino-acid polypeptide reads, in one-letter code: Zinc metalloproteinase/disintegrin (483 aa).

The first 20 residues, 1–20, serve as a signal peptide directing secretion; that stretch reads MIQVLLVTVCLAVFPYQGSS. The propeptide occupies 21–190; that stretch reads IILESGNVND…KASQLYLTPE (170 aa). One can recognise a Peptidase M12B domain in the interval 197–395; it reads RYVKLAIVVD…YKPQCILNAP (199 aa). Disulfide bonds link Cys-308/Cys-390, Cys-352/Cys-374, and Cys-354/Cys-357. His-333 contributes to the Zn(2+) binding site. Residue Glu-334 is part of the active site. His-337 and His-343 together coordinate Zn(2+). Residues 396-411 constitute a propeptide that is removed on maturation; that stretch reads LRTDTVSTPVSGNELL. One can recognise a Disintegrin domain in the interval 403–483; it reads TPVSGNELLE…SDDCPRWNDL (81 aa). 6 disulfide bridges follow: Cys-417–Cys-432, Cys-419–Cys-427, Cys-426–Cys-449, Cys-440–Cys-446, Cys-445–Cys-470, and Cys-458–Cys-477. The Cell attachment site motif lies at 462 to 464; sequence RGD.

The protein belongs to the venom metalloproteinase (M12B) family. P-II subfamily. P-IIa sub-subfamily. Monomer. The cofactor is Zn(2+). In terms of tissue distribution, expressed by the venom gland.

Its subcellular location is the secreted. Its function is as follows. Impairs hemostasis in the envenomed animal. Inhibits ADP- and collagen-induced human platelet aggregation with IC(50) of 123 and 135 nM, respectively. Inhibits sperm-egg binding in a concentration-dependent manner, but has no effect on the fusion of sperm-egg. This Protobothrops jerdonii (Jerdon's pitviper) protein is Zinc metalloproteinase/disintegrin.